The primary structure comprises 453 residues: Tubulin alpha-2 chain (453 aa).

Position 11 (glutamine 11) interacts with GTP. An N6-acetyllysine modification is found at lysine 40. GTP-binding residues include glutamate 71, glycine 144, threonine 145, threonine 179, asparagine 206, and asparagine 228. Residue glutamate 71 coordinates Mg(2+). Glutamate 254 is an active-site residue. Positions 432-453 (YEEVGAETAEGEGEEEDFGEEY) are disordered.

Belongs to the tubulin family. Dimer of alpha and beta chains. A typical microtubule is a hollow water-filled tube with an outer diameter of 25 nm and an inner diameter of 15 nM. Alpha-beta heterodimers associate head-to-tail to form protofilaments running lengthwise along the microtubule wall with the beta-tubulin subunit facing the microtubule plus end conferring a structural polarity. Microtubules usually have 13 protofilaments but different protofilament numbers can be found in some organisms and specialized cells. The cofactor is Mg(2+). In terms of processing, undergoes a tyrosination/detyrosination cycle, the cyclic removal and re-addition of a C-terminal tyrosine residue by the enzymes tubulin tyrosine carboxypeptidase (TTCP) and tubulin tyrosine ligase (TTL), respectively. Acetylation of alpha chains at Lys-40 stabilizes microtubules and affects affinity and processivity of microtubule motors. This modification has a role in multiple cellular functions, ranging from cell motility, cell cycle progression or cell differentiation to intracellular trafficking and signaling.

Its subcellular location is the cytoplasm. It localises to the cytoskeleton. It catalyses the reaction GTP + H2O = GDP + phosphate + H(+). Functionally, tubulin is the major constituent of microtubules, a cylinder consisting of laterally associated linear protofilaments composed of alpha- and beta-tubulin heterodimers. Microtubules grow by the addition of GTP-tubulin dimers to the microtubule end, where a stabilizing cap forms. Below the cap, tubulin dimers are in GDP-bound state, owing to GTPase activity of alpha-tubulin. This chain is Tubulin alpha-2 chain (TUBA2), found in Pelvetia fastigiata (Brown alga).